Consider the following 322-residue polypeptide: Quinolinate synthase (322 aa).

Iminosuccinate-binding residues include histidine 37 and serine 54. Cysteine 99 serves as a coordination point for [4Fe-4S] cluster. Residues 125–127 (YIN) and serine 142 each bind iminosuccinate. Cysteine 185 contacts [4Fe-4S] cluster. Residues 211-213 (HPE) and threonine 228 each bind iminosuccinate. Cysteine 278 provides a ligand contact to [4Fe-4S] cluster.

This sequence belongs to the quinolinate synthase family. Type 2 subfamily. The cofactor is [4Fe-4S] cluster.

The protein resides in the cytoplasm. It carries out the reaction iminosuccinate + dihydroxyacetone phosphate = quinolinate + phosphate + 2 H2O + H(+). It functions in the pathway cofactor biosynthesis; NAD(+) biosynthesis; quinolinate from iminoaspartate: step 1/1. Catalyzes the condensation of iminoaspartate with dihydroxyacetone phosphate to form quinolinate. The chain is Quinolinate synthase from Prosthecochloris aestuarii (strain DSM 271 / SK 413).